A 589-amino-acid chain; its full sequence is Protein FAM117B (589 aa).

A disordered region spans residues 1–310 (MSQRVRRNGS…RDKERQSPFH (310 aa)). A Phosphoserine modification is found at serine 10. Residues 16-29 (SLGGGAVATAGGPG) show a composition bias toward gly residues. Over residues 45–56 (QQQQQQHGSPTR) the composition is skewed to low complexity. A compositionally biased stretch (gly residues) spans 57–85 (SGGGGGGNNNGGCCGGASGPAGGGGGGGP). Serine 106 is modified (phosphoserine). The span at 108 to 136 (TVATQTGASATSTRGTSPTRSAAPGARGS) shows a compositional bias: low complexity. Over residues 137-146 (PPRPPPPPPL) the composition is skewed to pro residues. 2 stretches are compositionally biased toward low complexity: residues 147–158 (LGTVSSPSSSPT) and 207–220 (PSSS…RTSS). Serine 210, serine 219, serine 220, and serine 273 each carry phosphoserine. Basic residues predominate over residues 292–302 (RSKHSSRHHRD). Phosphoserine is present on residues serine 345 and serine 391. 2 disordered regions span residues 370–464 (QDIP…NNSY) and 556–589 (STNT…EAEG). Over residues 384-397 (QRSSSTRSIDTQTP) the composition is skewed to polar residues. Positions 404–417 (SNNSSRSQSVSPTS) are enriched in low complexity. Phosphoserine occurs at positions 449 and 457.

The polypeptide is Protein FAM117B (FAM117B) (Homo sapiens (Human)).